Here is a 230-residue protein sequence, read N- to C-terminus: V-type proton ATPase subunit E (230 aa).

Belongs to the V-ATPase E subunit family. V-ATPase is a heteromultimeric enzyme composed of a peripheral catalytic V1 complex (components A to H) attached to an integral membrane V0 proton pore complex (components: a, c, c', c'' and d).

In terms of biological role, subunit of the peripheral V1 complex of vacuolar ATPase essential for assembly or catalytic function. V-ATPase is responsible for acidifying a variety of intracellular compartments in eukaryotic cells. The chain is V-type proton ATPase subunit E (VATE) from Citrus limon (Lemon).